The sequence spans 323 residues: uncharacterized protein (323 aa).

The region spanning 16–95 (QRIDQFCLKI…DKLKIIFEDE (80 aa)) is the S4 RNA-binding domain. Residue Asp148 is part of the active site.

The protein belongs to the pseudouridine synthase RluA family.

The enzyme catalyses a uridine in RNA = a pseudouridine in RNA. This is an uncharacterized protein from Mycoplasma genitalium (strain ATCC 33530 / DSM 19775 / NCTC 10195 / G37) (Mycoplasmoides genitalium).